Reading from the N-terminus, the 331-residue chain is Polyprenyl transferase mpaA' (331 aa).

The next 8 membrane-spanning stretches (helical) occupy residues 27–47, 56–76, 127–147, 159–179, 190–210, 240–260, 264–284, and 295–315; these read MPYYTMMAAVWATFIAGALKL, IEFILYKAGLCFVHCLLLCGA, LILDGRNIWTLMLPLTASIML, VFVYPQYILGLAIGYPAITGW, GDIIKHCIPICLLVFFWCVYF, LFLAFLSVLPLLTIPYIISTI, WLWVSWMATWTVSIVMQIAQF, and IHWDNFLLGLWTIVACMVEVG.

This sequence belongs to the UbiA prenyltransferase family. The cofactor is Mg(2+).

The protein localises to the golgi apparatus membrane. The enzyme catalyses 5,7-dihydroxy-4-methylphthalide + (2E,6E)-farnesyl diphosphate = 4-farnesyl-3,5-dihydroxy-6-methylphthalide + diphosphate. It participates in secondary metabolite biosynthesis; terpenoid biosynthesis. Functionally, polyprenyl transferase; part of the gene cluster that mediates the biosynthesis of mycophenolic acid (MPA), the first isolated antibiotic natural product in the world obtained from a culture of Penicillium brevicompactum in 1893. MpaA' is a Golgi apparatus-associated enzyme that catalyzes the prenylation of 5,7-dihydroxy-4,6-dimethylphthalide (DHMP) to yield farnesyl-DHMP (FDHMP). The first step of the pathway is the synthesis of 5-methylorsellinic acid (5MOA) by the cytosolic polyketide synthase mpaC. 5MOA is then converted to the phthalide compound 5,7-dihydroxy-4,6-dimethylphthalide (DHMP) by the endoplasmic reticulum-bound cytochrome P450 monooxygenase mpaDE. MpaDE first catalyzes hydroxylation of 5-MOA to 4,6-dihydroxy-2-(hydroxymethyl)-3-methylbenzoic acid (DHMB). MpaDE then acts as a lactone synthase that catalyzes the ring closure to convert DHMB into DHMP. The next step is the prenylation of DHMP by the Golgi apparatus-associated prenyltransferase mpaA to yield farnesyl-DHMP (FDHMP). The ER-bound oxygenase mpaB then mediates the oxidative cleavage the C19-C20 double bond in FDHMP to yield FDHMP-3C via a mycophenolic aldehyde intermediate. The O-methyltransferase mpaG catalyzes the methylation of FDHMP-3C to yield MFDHMP-3C. After the cytosolic methylation of FDHMP-3C, MFDHMP-3C enters into peroxisomes probably via free diffusion due to its low molecular weight. Upon a peroxisomal CoA ligation reaction, catalyzed by a beta-oxidation component enzyme acyl-CoA ligase ACL891, MFDHMP-3C-CoA would then be restricted to peroxisomes for the following beta-oxidation pathway steps. The peroxisomal beta-oxidation machinery than converts MFDHMP-3C-CoA into MPA_CoA, via a beta-oxidation chain-shortening process. Finally mpaH acts as a peroxisomal acyl-CoA hydrolase with high substrate specificity toward MPA-CoA to release the final product MPA. The sequence is that of Polyprenyl transferase mpaA' from Penicillium brevicompactum.